The chain runs to 224 residues: Pleckstrin homology domain-containing family B member 2 (224 aa).

The region spanning 2-109 (AFVKSGWLLR…WKIALQDART (108 aa)) is the PH domain. K20 contacts a 1,2-diacyl-sn-glycero-3-phospho-L-serine.

The protein resides in the recycling endosome membrane. Its function is as follows. Involved in retrograde transport of recycling endosomes. This Gallus gallus (Chicken) protein is Pleckstrin homology domain-containing family B member 2 (PLEKHB2).